The sequence spans 159 residues: Transcriptional repressor NrdR (159 aa).

A zinc finger lies at 3–34; it reads CPFCGAEDTSVVDSRISEEGARIRRRRRCVEC. An ATP-cone domain is found at 49–139; the sequence is PQVIKQDGNR…VYRSFEDVGD (91 aa).

This sequence belongs to the NrdR family. Zn(2+) serves as cofactor.

In terms of biological role, negatively regulates transcription of bacterial ribonucleotide reductase nrd genes and operons by binding to NrdR-boxes. This chain is Transcriptional repressor NrdR, found in Nitrosomonas europaea (strain ATCC 19718 / CIP 103999 / KCTC 2705 / NBRC 14298).